Consider the following 2475-residue polypeptide: MGNRGSSTSSRPPPSSEANIYAKLQDHIQRQTRPFSGGGYFNGGGDKNPVQHIKDYHIDSVSSKAKLRIIEGIIRAIAKIGFKVDTKQPIEDILKDIKKQLPDPRAGSTFVKNAEKQETVCKMIADAINQEFIDLGQDKLIDTTEGAASICRQIVLYINSLTHGLRAEYLDVHGSIENTLENIKLLNDAIKQLHERMVTEVTKAAPNEEVINAVTMIEAVYRRLLNEQNLQINILTNFIDNILTPTQKELDKLQTDEVDIIKLLNDTNSVLGTKNFGKVLSYTLCNLGIAASVANKINKALQKVGLKVEQYLQSKNWEEFDKELDLKRFSGLVSAENIAEFEKAVNLLRQTFNERHKILENSCAKKGGDEEKTPLDRRIEAQRLDRKHILMEFLNKSTQAYNDFLENVKKIGIKLVKEIALTPNITRLRDALSRINDMGTIALDLSLIGFYTNAAAREERETFLTQFMLVKNVLEEQSKTDPNFKNLYDSCSRLLQIIDFYTDIVQKKYGGEEDCECTRVGGAALTVEELGLSKAARSQVDLNQAINTFMYYYYVAQIYSNLTHNKQEFQSYEENYATILGDAIAGRLMQLDTEKNARINSPAVDLARGHVGPNPGGAQEVDWKAAVSAIELEYDVKRRFYRALEGLDLYLKNITKTFVNNIDSIQTVQQMLDGVRIIGRWFTEATGDTLAQVFESFPTSAGNDSNVFTDNAPAGHYYEKVAAEIQQGRSVGTLRPVRASQAKNIRDLIGRSLSNFQALKNIINAFARIGDMLGGEELRQMVPMSPLQIYKTLLEYIQHSALSVGLKNLNQSEIGGQRVALARTPEEAAQRVYLSTVRVNDALSTRWETEDVFFTFMLKSMAAKIFIVLGIYDMFERPEPVYKLIPTRMILGGADELEPEVIPEAAELYFRLPRLAEFYQKLFSFRDENVQISMLPELEGIFSGLIRIIFMRPIELINIGDYSETEIRQLIKEINVIYQHFNLEYGEQEATKKALIHFVNEINRRFGVITRTEWEKFQRIVQEARTMNDFGMMNQTNYSILPDEDGYTQSSQLLPSDRFISPSSQPTPKWRPALYNIDSVDVQTGMLQPNSQWDLVQKFRKQLSEMFEDPSLQQELGKVSYQELIRQAINELKKDHTDKIQIVSKLIQGSESLADTDVNKIFLFHETVITGLNLLSAIYVLLNNFRNNIKGLDLDTIQKSIIEWLRETPANVNHANLIDWLGRKHGAISEIRNPGLVIKEINMRLSEVYPDPTTEANVPQDRNLTTETLFAWIVPYVGIPAGGGVRAEQELAARYLVDNQRIMQLLLTNIFEMTSSFNKMVQVRFPETSTAQVHLDFTGLISLIDSLMADTKYFLNLLRPHIDKNIIQYYENRSNPGSFYWLEEHLIDKLIKPPTDAGGRPLPGGELGLEGVNQIINKTYTLLTKPYNVLQLRGGAQRRDAANIQINNNPQPSERFEQYGRVFSRLVFYDALENNSGLRVEQVVLGDFRLSNLIRTNNAQEENALSYWDNIALRTYANVNDAANNLRRYRLYGSDHGIQNNRSMMMVFNQLVASYIARFYDAPSGKIYLNLINAFANGNFSQAVMEMGYAHPDLARNNNAFGHRGDPTEQSVLLLSLGLILQRLIKDTNRQGLSQHLISTLTEIPIYLKENYRANLPLFNKMFNILISQGELLKQFIQYTNVQLARPNLTALLGANNDSVIYYNNNINVPMTGLSVGQAAMRGIGGVFRPNVTLMPLGDAQSNTSDIVRKRLVAVIDGIIRGSHTLADSAMEVLHELTDHPIYLETEEHFIQNYMSRYNKEPLMPFSLSLYYLRDLRIENNEVYDPLLYPNLESGSPEFKLLYGTRKLLGNDPVQLSDMPGVQLIMKNYNETVVAREQITPTRFEHFYTHAIQALRFIINIRSFKTVMMYNENTFGGVNLISENRDDKPIITAGIGMNAVYSLRKTLQDVISFVESSYQEEQINHIHKIVSPKGQTRTLGSNRERERIFNLFDMNIIPINVNALMRSIPLANIYNYDYSFEEIACLMYGISAEKVRSLNTAAPQPDIAEVLNIPNRPPMNTREFMLKLLINPYVSVSITQYGNELLSKGNAGYMSRIFRGDNALNMGRPKFLSDQIFNKVLFGSLYPTQFDYDEAGPSLAAGIQRGRERWGHPMSIYINQALHEIVRTIRLAETVRGLRNVIDRNQIIGELNAFRTQLEDTRREVNNLIQTPEIRNNPTPEIIAAVQNWGQQYRGQITDLIDLIGNVGQANSMINLIQNITPQTAGAQLIALFNIRGLPAPPPRQVIQNDIEAMQWFMTMVINHPPILIAPFMLLVNNLKEFLNTLERYVYKTPRWLGPGTARIAQPPVGMAPGINMRHHTSYTENSVLTYITEQNREEGPWSIVKQVGVGIQKPTLVQIGKDRFDTRLIRNLIFITNIQRLLRLRLNLELSQFRNVLVSPDHIINPSITEYGFSITGPSETFSDKQYDSDIRIL.

Gly2 carries the N-myristoyl glycine; by host lipid modification. Residues 2184 to 2211 adopt a coiled-coil conformation; the sequence is RNQIIGELNAFRTQLEDTRREVNNLIQT.

It belongs to the asfivirus polyprotein pp220 family. In terms of processing, specific enzymatic cleavages in vivo by the viral pS273R protease yield mature proteins.

It is found in the host cytoplasm. The protein localises to the host perinuclear region. Its subcellular location is the virion. The protein resides in the host nucleus. Functionally, essential for the core assembly. Its myristoyl moiety may function as a membrane-anchoring signal to bind the developing core shell to the inner viral envelope. In terms of biological role, the structural protein p34 is a component of the virus core shell. Its function is as follows. The structural protein p14 is a component of the virus core shell. The structural protein p37 is a component of the virus core shell. Functionally, the structural protein p150 is a component of the virus core shell. The polypeptide is Polyprotein pp220 (African swine fever virus (isolate Tick/South Africa/Pretoriuskop Pr4/1996) (ASFV)).